Here is a 521-residue protein sequence, read N- to C-terminus: Riboflavin transporter MCH5 (521 aa).

Disordered stretches follow at residues 1-33 (MSSD…SIHY) and 65-96 (NKGT…NEEI). Residues 1-103 (MSSDSLTPKD…EEIESFPEGG (103 aa)) lie on the Cytoplasmic side of the membrane. The chain crosses the membrane as a helical span at residues 104 to 124 (FKAWVVTFGCFLGLIACFGLL). N125 carries an N-linked (GlcNAc...) asparagine glycan. Topologically, residues 125–143 (NSTGVIESHLQDNQLSSES) are extracellular. Residues 144–164 (VSTIGWLFSLFLFVCSASCII) form a helical membrane-spanning segment. Residues 165 to 172 (SGTYFDRN) lie on the Cytoplasmic side of the membrane. The helical transmembrane segment at 173–193 (GFRTIMIVGTVFHVAGLFATA) threads the bilayer. N-linked (GlcNAc...) asparagine glycosylation occurs at N194. Over 194–200 (NSTKYWH) the chain is Extracellular. Residues 201–221 (FILSFAIVCGFGNGIVLSPLV) traverse the membrane as a helical segment. Topologically, residues 222–233 (SVPAHYFFKRRG) are cytoplasmic. The helical transmembrane segment at 234 to 254 (TALAMATIGGSVGGVVFPIML) threads the bilayer. The Extracellular portion of the chain corresponds to 255 to 269 (RSFFSMKSDTDPTYG). The helical transmembrane segment at 270-290 (FVWGIRTLGFLDLALLTLSII) threads the bilayer. At 291–325 (LVKERLPHVIENSKDGESRWRYILRVYILQCFDAK) the chain is on the cytoplasmic side. A helical membrane pass occupies residues 326–346 (AFLDMKYLFCVLGTVFSELSI). The Extracellular segment spans residues 347 to 367 (NSALTYYGSYATSHGISANDA). The helical transmembrane segment at 368–388 (YTLIMIINVCGIPGRWVPGYL) threads the bilayer. Residues 389-396 (SDKFGRFN) lie on the Cytoplasmic side of the membrane. A helical transmembrane segment spans residues 397–417 (VAIATLLTLFIVMFVGWLPFG). The Extracellular portion of the chain corresponds to 418 to 422 (TNLTN). Residue N419 is glycosylated (N-linked (GlcNAc...) asparagine). Residues 423–443 (MYVISALYGFCSGSVFSLLPV) form a helical membrane-spanning segment. At 444–461 (CCGQISKTEEFGKRYSTM) the chain is on the cytoplasmic side. Residues 462-482 (YFVVGFGTLVGIPITGAIISI) traverse the membrane as a helical segment. Over 483-487 (KTTAD) the chain is Extracellular. The chain crosses the membrane as a helical span at residues 488-508 (YQHYIIFCGLATFVSAVCYII). Residues 509-521 (SRAYCVGFKWVRF) lie on the Cytoplasmic side of the membrane.

This sequence belongs to the major facilitator superfamily. Monocarboxylate porter (TC 2.A.1.13) family.

The protein resides in the cell membrane. Functionally, riboflavin transporter involved in riboflavin (vitamin B2) uptake. Does not act in the transport of monocarboxylic acids across the plasma membrane. The polypeptide is Riboflavin transporter MCH5 (MCH5) (Saccharomyces cerevisiae (strain ATCC 204508 / S288c) (Baker's yeast)).